The following is a 245-amino-acid chain: Transcription factor FUP7 (245 aa).

The segment at residues 10–37 (CKTCRSRKQKCDGIRPACSRCRSLGLQC) is a DNA-binding region (zn(2)-C6 fungal-type). A disordered region spans residues 162–216 (ESSSGNADYQHEDEVQSPAGAGDDMAVGDPYRDDSVDQDSIGQPPQRTESVGNMQ). Residues 199–214 (QDSIGQPPQRTESVGN) show a composition bias toward polar residues.

It is found in the nucleus. Functionally, transcription factor; part of the gene cluster that mediates the biosynthesis of the mycotoxin fusaproliferin (FUP) that belongs to the class of bicyclic sesterterpenoids. This Fusarium proliferatum (strain ET1) (Orchid endophyte fungus) protein is Transcription factor FUP7.